The following is a 213-amino-acid chain: MTLNLADLRQRYLKDGLDENNTDDNPFVQFEKWFHQAQKSELLEPNAMVLSTVNEVNQPSTRTVLLKQFSDDGFVFFTNYRSQKAKDIQHNPKVALHFNWLELERQVKIQGVAAKISLKDSMRYFATRPKGSQIGAWVSHQSEVISSKQLLLSQFEKMKQKFQSGEIPFPDFWGGYMVVPQQIEFWQGGDNRLHDRICYTLKDNQWVKQRLAP.

Residues 9-12 (RQRY) and Lys67 contribute to the substrate site. Residues 62 to 67 (RTVLLK), 77 to 78 (FT), Lys84, and Gln106 contribute to the FMN site. Substrate is bound by residues Tyr124, Arg128, and Ser132. FMN contacts are provided by residues 141–142 (QS) and Trp186. Substrate is bound at residue 192–194 (RLH). Arg196 is a binding site for FMN.

Belongs to the pyridoxamine 5'-phosphate oxidase family. As to quaternary structure, homodimer. The cofactor is FMN.

The enzyme catalyses pyridoxamine 5'-phosphate + O2 + H2O = pyridoxal 5'-phosphate + H2O2 + NH4(+). It carries out the reaction pyridoxine 5'-phosphate + O2 = pyridoxal 5'-phosphate + H2O2. It participates in cofactor metabolism; pyridoxal 5'-phosphate salvage; pyridoxal 5'-phosphate from pyridoxamine 5'-phosphate: step 1/1. Its pathway is cofactor metabolism; pyridoxal 5'-phosphate salvage; pyridoxal 5'-phosphate from pyridoxine 5'-phosphate: step 1/1. Its function is as follows. Catalyzes the oxidation of either pyridoxine 5'-phosphate (PNP) or pyridoxamine 5'-phosphate (PMP) into pyridoxal 5'-phosphate (PLP). The chain is Pyridoxine/pyridoxamine 5'-phosphate oxidase 2 from Hydrogenovibrio crunogenus (strain DSM 25203 / XCL-2) (Thiomicrospira crunogena).